A 370-amino-acid polypeptide reads, in one-letter code: UDP-N-acetylglucosamine--N-acetylmuramyl-(pentapeptide) pyrophosphoryl-undecaprenol N-acetylglucosamine transferase (370 aa).

UDP-N-acetyl-alpha-D-glucosamine is bound by residues Thr-15–Gly-17, Asn-129, Arg-170, Ser-200, Ile-253, and Gln-298.

This sequence belongs to the glycosyltransferase 28 family. MurG subfamily.

It is found in the cell inner membrane. The catalysed reaction is di-trans,octa-cis-undecaprenyl diphospho-N-acetyl-alpha-D-muramoyl-L-alanyl-D-glutamyl-meso-2,6-diaminopimeloyl-D-alanyl-D-alanine + UDP-N-acetyl-alpha-D-glucosamine = di-trans,octa-cis-undecaprenyl diphospho-[N-acetyl-alpha-D-glucosaminyl-(1-&gt;4)]-N-acetyl-alpha-D-muramoyl-L-alanyl-D-glutamyl-meso-2,6-diaminopimeloyl-D-alanyl-D-alanine + UDP + H(+). It functions in the pathway cell wall biogenesis; peptidoglycan biosynthesis. Cell wall formation. Catalyzes the transfer of a GlcNAc subunit on undecaprenyl-pyrophosphoryl-MurNAc-pentapeptide (lipid intermediate I) to form undecaprenyl-pyrophosphoryl-MurNAc-(pentapeptide)GlcNAc (lipid intermediate II). In Salinibacter ruber (strain DSM 13855 / M31), this protein is UDP-N-acetylglucosamine--N-acetylmuramyl-(pentapeptide) pyrophosphoryl-undecaprenol N-acetylglucosamine transferase.